Here is a 474-residue protein sequence, read N- to C-terminus: Adenylyl cyclase-associated protein 1 (474 aa).

At Ala2 the chain carries N-acetylalanine. Residue Tyr31 is modified to Phosphotyrosine. A Phosphoserine modification is found at Ser34. Lys80 is modified (N6-acetyllysine). Disordered stretches follow at residues 215-253 and 277-316; these read ELSGLPSGPSVGSGPPPPPPGPPPPPISTSSGSDDSASR and MKTHKNPALKAQSGPVRSGPKPFSAPKPQTSPSPKPATKK. Residues 217 to 227 are compositionally biased toward low complexity; that stretch reads SGLPSGPSVGS. Over residues 228–241 the composition is skewed to pro residues; that stretch reads GPPPPPPGPPPPPI. Lys286 carries the N6-methyllysine modification. 3 positions are modified to phosphoserine: Ser289, Ser294, and Ser300. Positions 299 to 311 are enriched in pro residues; that stretch reads FSAPKPQTSPSPK. Thr306 is modified (phosphothreonine). Residues Ser307 and Ser309 each carry the phosphoserine modification. The 141-residue stretch at 312–452 folds into the C-CAP/cofactor C-like domain; sequence PATKKEPALL…EGGDFNEFPV (141 aa). Lys347 participates in a covalent cross-link: Glycyl lysine isopeptide (Lys-Gly) (interchain with G-Cter in SUMO1).

The protein belongs to the CAP family. As to quaternary structure, homodimer. Binds actin monomers. In terms of tissue distribution, ubiquitous.

It localises to the cell membrane. Functionally, directly regulates filament dynamics and has been implicated in a number of complex developmental and morphological processes, including mRNA localization and the establishment of cell polarity. The chain is Adenylyl cyclase-associated protein 1 (Cap1) from Mus musculus (Mouse).